The chain runs to 421 residues: D-aspartate ligase (421 aa).

The 203-residue stretch at 130 to 332 (YEVCEEYDLP…LARFVTEDRV (203 aa)) folds into the ATP-grasp domain. Position 161–224 (161–224 (PFEFPVALKP…QDFIPGDDSN (64 aa))) interacts with ATP. Mg(2+) is bound by residues aspartate 290, glutamate 304, and asparagine 306.

The cofactor is Mg(2+).

It catalyses the reaction [beta-GlcNAc-(1-&gt;4)-Mur2Ac(oyl-L-Ala-gamma-D-Glu-L-Lys-D-Ala-D-Ala)](n) + n D-aspartate + n ATP = [beta-GlcNAc-(1-&gt;4)-Mur2Ac(oyl-L-Ala-gamma-D-Glu-6-N-(beta-D-Asp)-L-Lys-D-Ala-D-Ala)]n + n ADP + n phosphate + n H(+). The protein operates within cell wall biogenesis; peptidoglycan biosynthesis. Functionally, catalyzes the addition of D-aspartate onto the lysine residue in the peptidoglycan precursor UDP-MurNAc-pentapeptide. The ligation occurs between the beta-carboxylate of D-Asp and the epsilon-amino group of L-Lys. Is highly specific for D-aspartate, as L-aspartate, D-glutamate, D-alanine, D-iso-asparagine and D-malate are not substrates. The sequence is that of D-aspartate ligase from Enterococcus faecium (strain Aus0004).